Reading from the N-terminus, the 333-residue chain is Ketol-acid reductoisomerase (NADP(+)) (333 aa).

The KARI N-terminal Rossmann domain occupies 1-171 (MSNHTQPKIA…GGARANIIKT (171 aa)). NADP(+)-binding positions include 14-17 (YGSQ), Arg37, Thr42, and 72-75 (DMVQ). The active site involves His97. Gly123 is a binding site for NADP(+). In terms of domain architecture, KARI C-terminal knotted spans 172-317 (TFKEETETDL…KKLRAKMVWL (146 aa)). Residues Asp180, Glu184, Glu216, and Glu220 each contribute to the Mg(2+) site. Substrate is bound at residue Ser241.

This sequence belongs to the ketol-acid reductoisomerase family. The cofactor is Mg(2+).

It carries out the reaction (2R)-2,3-dihydroxy-3-methylbutanoate + NADP(+) = (2S)-2-acetolactate + NADPH + H(+). The enzyme catalyses (2R,3R)-2,3-dihydroxy-3-methylpentanoate + NADP(+) = (S)-2-ethyl-2-hydroxy-3-oxobutanoate + NADPH + H(+). Its pathway is amino-acid biosynthesis; L-isoleucine biosynthesis; L-isoleucine from 2-oxobutanoate: step 2/4. It participates in amino-acid biosynthesis; L-valine biosynthesis; L-valine from pyruvate: step 2/4. Its function is as follows. Involved in the biosynthesis of branched-chain amino acids (BCAA). Catalyzes an alkyl-migration followed by a ketol-acid reduction of (S)-2-acetolactate (S2AL) to yield (R)-2,3-dihydroxy-isovalerate. In the isomerase reaction, S2AL is rearranged via a Mg-dependent methyl migration to produce 3-hydroxy-3-methyl-2-ketobutyrate (HMKB). In the reductase reaction, this 2-ketoacid undergoes a metal-dependent reduction by NADPH to yield (R)-2,3-dihydroxy-isovalerate. In Xanthomonas axonopodis pv. citri (strain 306), this protein is Ketol-acid reductoisomerase (NADP(+)).